The primary structure comprises 902 residues: Chitin synthase 3 (902 aa).

Positions 1-15 (MAYNRLDDDYFDNRR) are enriched in basic and acidic residues. A disordered region spans residues 1 to 68 (MAYNRLDDDY…MGPGRHTPSD (68 aa)). Residues 19 to 30 (NRPPPHRTPSPG) show a composition bias toward pro residues. N80 is a glycosylation site (N-linked (GlcNAc...) asparagine). The disordered stretch occupies residues 104–161 (HHDAYYNPTYTPTPNEAQTPYGEPGYEHDGRPLLPQQDSYGQYSDNPQQQQQQQGGLK). Polar residues-rich tracts occupy residues 111 to 121 (PTYTPTPNEAQ) and 139 to 150 (QQDSYGQYSDNP). 9 helical membrane passes run 449 to 469 (SAFGFISVLPGAFSAYRYIAL), 547 to 567 (RWLNGSFFAAIYAIAHFYQFF), 577 to 597 (IAFFIEFTFNTVNMIFAWFAI), 623 to 643 (ILGVCFEWLYGVSLITCFVLA), 656 to 676 (LAMIYFWAIIFCYLLFAAVFI), 699 to 719 (VVVTLILSIMSTYGIWLVASL), 731 to 751 (LVQYMLLSPTFTNVLNVYAFC), 830 to 850 (VVVLLWMVTNFGLAAVVLSTA), and 874 to 894 (VVLYSVAALSGFKFIGAMWFL).

This sequence belongs to the chitin synthase family. Class II subfamily.

It is found in the cell membrane. It carries out the reaction [(1-&gt;4)-N-acetyl-beta-D-glucosaminyl](n) + UDP-N-acetyl-alpha-D-glucosamine = [(1-&gt;4)-N-acetyl-beta-D-glucosaminyl](n+1) + UDP + H(+). Functionally, polymerizes chitin, a structural polymer of the cell wall and septum, by transferring the sugar moiety of UDP-GlcNAc to the non-reducing end of the growing chitin polymer. CHS1 and CHS3 have compensatory functions in cell wall modifications in responses to stresses. Might function as a negative regulator on expression of other CHS genes. In Pyricularia oryzae (strain 70-15 / ATCC MYA-4617 / FGSC 8958) (Rice blast fungus), this protein is Chitin synthase 3.